Consider the following 498-residue polypeptide: Aspartyl/glutamyl-tRNA(Asn/Gln) amidotransferase subunit B (498 aa).

It belongs to the GatB/GatE family. GatB subfamily. In terms of assembly, heterotrimer of A, B and C subunits.

The catalysed reaction is L-glutamyl-tRNA(Gln) + L-glutamine + ATP + H2O = L-glutaminyl-tRNA(Gln) + L-glutamate + ADP + phosphate + H(+). The enzyme catalyses L-aspartyl-tRNA(Asn) + L-glutamine + ATP + H2O = L-asparaginyl-tRNA(Asn) + L-glutamate + ADP + phosphate + 2 H(+). Allows the formation of correctly charged Asn-tRNA(Asn) or Gln-tRNA(Gln) through the transamidation of misacylated Asp-tRNA(Asn) or Glu-tRNA(Gln) in organisms which lack either or both of asparaginyl-tRNA or glutaminyl-tRNA synthetases. The reaction takes place in the presence of glutamine and ATP through an activated phospho-Asp-tRNA(Asn) or phospho-Glu-tRNA(Gln). In Caulobacter vibrioides (strain ATCC 19089 / CIP 103742 / CB 15) (Caulobacter crescentus), this protein is Aspartyl/glutamyl-tRNA(Asn/Gln) amidotransferase subunit B.